The sequence spans 438 residues: UDP-N-acetylmuramoylalanine--D-glutamate ligase (438 aa).

112–118 (GSNGKST) provides a ligand contact to ATP.

Belongs to the MurCDEF family.

Its subcellular location is the cytoplasm. The catalysed reaction is UDP-N-acetyl-alpha-D-muramoyl-L-alanine + D-glutamate + ATP = UDP-N-acetyl-alpha-D-muramoyl-L-alanyl-D-glutamate + ADP + phosphate + H(+). It functions in the pathway cell wall biogenesis; peptidoglycan biosynthesis. Its function is as follows. Cell wall formation. Catalyzes the addition of glutamate to the nucleotide precursor UDP-N-acetylmuramoyl-L-alanine (UMA). This Shigella sonnei (strain Ss046) protein is UDP-N-acetylmuramoylalanine--D-glutamate ligase.